The primary structure comprises 309 residues: Mycothiol acetyltransferase (309 aa).

N-acetyltransferase domains lie at 16–158 (ETLA…LDLP) and 166–309 (VSVR…RTET). E47 lines the 1D-myo-inositol 2-(L-cysteinylamino)-2-deoxy-alpha-D-glucopyranoside pocket. Position 92–94 (92–94 (LVV)) interacts with acetyl-CoA. Residues E193, K232, and E241 each coordinate 1D-myo-inositol 2-(L-cysteinylamino)-2-deoxy-alpha-D-glucopyranoside. Acetyl-CoA-binding positions include 245-247 (LGI) and 252-258 (QGGGLGK). Y279 serves as a coordination point for 1D-myo-inositol 2-(L-cysteinylamino)-2-deoxy-alpha-D-glucopyranoside.

It belongs to the acetyltransferase family. MshD subfamily. Monomer.

It catalyses the reaction 1D-myo-inositol 2-(L-cysteinylamino)-2-deoxy-alpha-D-glucopyranoside + acetyl-CoA = mycothiol + CoA + H(+). Functionally, catalyzes the transfer of acetyl from acetyl-CoA to desacetylmycothiol (Cys-GlcN-Ins) to form mycothiol. This chain is Mycothiol acetyltransferase, found in Streptomyces coelicolor (strain ATCC BAA-471 / A3(2) / M145).